We begin with the raw amino-acid sequence, 49 residues long: Large ribosomal subunit protein bL33 (49 aa).

It belongs to the bacterial ribosomal protein bL33 family.

The sequence is that of Large ribosomal subunit protein bL33 from Clostridium botulinum (strain ATCC 19397 / Type A).